A 445-amino-acid polypeptide reads, in one-letter code: 3-phosphoshikimate 1-carboxyvinyltransferase (445 aa).

The segment covering 1 to 20 (MSSTHPGRTIRSGATQNLSG) has biased composition (polar residues). Positions 1–24 (MSSTHPGRTIRSGATQNLSGTIRP) are disordered. 3-phosphoshikimate contacts are provided by Lys28, Ser29, and Arg33. Phosphoenolpyruvate is bound at residue Lys28. Positions 101 and 129 each coordinate phosphoenolpyruvate. The 3-phosphoshikimate site is built by Ser174, Gln176, Asp322, and Lys349. Position 176 (Gln176) interacts with phosphoenolpyruvate. Asp322 functions as the Proton acceptor in the catalytic mechanism. Arg353 and Arg397 together coordinate phosphoenolpyruvate.

It belongs to the EPSP synthase family. As to quaternary structure, monomer.

It localises to the cytoplasm. The catalysed reaction is 3-phosphoshikimate + phosphoenolpyruvate = 5-O-(1-carboxyvinyl)-3-phosphoshikimate + phosphate. Its pathway is metabolic intermediate biosynthesis; chorismate biosynthesis; chorismate from D-erythrose 4-phosphate and phosphoenolpyruvate: step 6/7. Functionally, catalyzes the transfer of the enolpyruvyl moiety of phosphoenolpyruvate (PEP) to the 5-hydroxyl of shikimate-3-phosphate (S3P) to produce enolpyruvyl shikimate-3-phosphate and inorganic phosphate. The polypeptide is 3-phosphoshikimate 1-carboxyvinyltransferase (Magnetococcus marinus (strain ATCC BAA-1437 / JCM 17883 / MC-1)).